The sequence spans 434 residues: Glutamyl-tRNA reductase (434 aa).

Substrate-binding positions include 54 to 57 (TCNR), Ser-113, 118 to 120 (EAQ), and Gln-124. Catalysis depends on Cys-55, which acts as the Nucleophile. 193–198 (GGGEVS) is an NADP(+) binding site.

The protein belongs to the glutamyl-tRNA reductase family. Homodimer.

The enzyme catalyses (S)-4-amino-5-oxopentanoate + tRNA(Glu) + NADP(+) = L-glutamyl-tRNA(Glu) + NADPH + H(+). Its pathway is porphyrin-containing compound metabolism; protoporphyrin-IX biosynthesis; 5-aminolevulinate from L-glutamyl-tRNA(Glu): step 1/2. It functions in the pathway porphyrin-containing compound metabolism; chlorophyll biosynthesis. Functionally, catalyzes the NADPH-dependent reduction of glutamyl-tRNA(Glu) to glutamate 1-semialdehyde (GSA). The sequence is that of Glutamyl-tRNA reductase from Chloroflexus aurantiacus (strain ATCC 29366 / DSM 635 / J-10-fl).